Reading from the N-terminus, the 596-residue chain is Aspartate--tRNA(Asp/Asn) ligase (596 aa).

Glu175 lines the L-aspartate pocket. The aspartate stretch occupies residues 199-202; the sequence is QQYK. The L-aspartate site is built by Arg221 and His454. 221–223 contributes to the ATP binding site; sequence RDE. Residue Glu488 coordinates ATP. L-aspartate is bound at residue Arg495. 540–543 is an ATP binding site; that stretch reads GIDR.

It belongs to the class-II aminoacyl-tRNA synthetase family. Type 1 subfamily. As to quaternary structure, homodimer.

It localises to the cytoplasm. The enzyme catalyses tRNA(Asx) + L-aspartate + ATP = L-aspartyl-tRNA(Asx) + AMP + diphosphate. Functionally, aspartyl-tRNA synthetase with relaxed tRNA specificity since it is able to aspartylate not only its cognate tRNA(Asp) but also tRNA(Asn). Reaction proceeds in two steps: L-aspartate is first activated by ATP to form Asp-AMP and then transferred to the acceptor end of tRNA(Asp/Asn). In Rhizobium rhizogenes (strain K84 / ATCC BAA-868) (Agrobacterium radiobacter), this protein is Aspartate--tRNA(Asp/Asn) ligase.